The following is a 247-amino-acid chain: Particulate methane monooxygenase beta subunit (247 aa).

A run of 6 helical transmembrane segments spans residues 23–43 (WMALFVVFFVIVGSYHIHAML), 59–79 (LWVTVTPIVLVTFPAAVQSYL), 86–106 (PWGATVCVLGLLLGEWINRYF), 111–131 (WTYFPINFVFPASLVPGAIIL), 145–165 (AIVGAMGWGLIFYPGNWPIIA), and 215–235 (VSAFFSAFMSILIYFMWHFIG).

As to quaternary structure, m.capsulatus has two forms of methane monooxygenase, a soluble (sMMO) and a membrane-bound (particulate) type (pMMO). The particulate type is a nonamer composed of three alpha:beta:gamma heterotrimeric protomers assembled into a cylindrical structure; the beta and gamma subunits comprise the bulk of the membrane-spanning regions and the soluble regions are derived primarily from alpha subunits which form two antiparallel beta-barrel-like structures each. This assembly, also called pMMO hydroxylase (pMMO-H), is proposed to associate with methanol dehydrogenase (MDH), also designated as pMMO-R, to form the pMMO-C complex which seems to have greater methane monooxygenase activity.

The protein resides in the membrane. It catalyses the reaction methane + a quinol + O2 = methanol + a quinone + H2O. Functionally, non-catalytic subunit of the methane monooxygenase that is responsible for the initial oxygenation of methane to methanol in methanotrophs. At least in vitro, specific quinols can replace NADH as reductants. The protein is Particulate methane monooxygenase beta subunit (pmoA1) of Methylococcus capsulatus (strain ATCC 33009 / NCIMB 11132 / Bath).